A 460-amino-acid chain; its full sequence is Asparagine--tRNA ligase (460 aa).

The protein belongs to the class-II aminoacyl-tRNA synthetase family. As to quaternary structure, homodimer.

The protein localises to the cytoplasm. It catalyses the reaction tRNA(Asn) + L-asparagine + ATP = L-asparaginyl-tRNA(Asn) + AMP + diphosphate + H(+). In Picosynechococcus sp. (strain ATCC 27264 / PCC 7002 / PR-6) (Agmenellum quadruplicatum), this protein is Asparagine--tRNA ligase.